The primary structure comprises 509 residues: ATP synthase subunit alpha (509 aa).

169 to 176 (GDRQTGKT) serves as a coordination point for ATP.

It belongs to the ATPase alpha/beta chains family. In terms of assembly, F-type ATPases have 2 components, CF(1) - the catalytic core - and CF(0) - the membrane proton channel. CF(1) has five subunits: alpha(3), beta(3), gamma(1), delta(1), epsilon(1). CF(0) has three main subunits: a(1), b(2) and c(9-12). The alpha and beta chains form an alternating ring which encloses part of the gamma chain. CF(1) is attached to CF(0) by a central stalk formed by the gamma and epsilon chains, while a peripheral stalk is formed by the delta and b chains.

The protein localises to the cell inner membrane. The catalysed reaction is ATP + H2O + 4 H(+)(in) = ADP + phosphate + 5 H(+)(out). Produces ATP from ADP in the presence of a proton gradient across the membrane. The alpha chain is a regulatory subunit. In Brucella suis biovar 1 (strain 1330), this protein is ATP synthase subunit alpha.